Reading from the N-terminus, the 378-residue chain is Putative F-box protein At4g17565 (378 aa).

The F-box domain maps to 16–63 (PKWSELCPDLLRSIFEQLSFTNLNRAKLVCRSWNSASRGCVPKRNQIP).

The protein is Putative F-box protein At4g17565 of Arabidopsis thaliana (Mouse-ear cress).